A 424-amino-acid chain; its full sequence is UPF0053 protein MG146 (424 aa).

The CNNM transmembrane domain occupies 6–191 (SGLTLTVIIL…EQNGLFSKED (186 aa)). 4 consecutive transmembrane segments (helical) span residues 7-27 (GLTL…STVV), 71-91 (LITI…ILFL), 101-121 (LLSS…FCEI), and 135-155 (LVLF…ITKL). 2 consecutive CBS domains span residues 210–270 (MIKW…PKSL) and 272–332 (LNQL…IYDE).

It belongs to the UPF0053 family.

It is found in the cell membrane. The sequence is that of UPF0053 protein MG146 from Mycoplasma genitalium (strain ATCC 33530 / DSM 19775 / NCTC 10195 / G37) (Mycoplasmoides genitalium).